We begin with the raw amino-acid sequence, 414 residues long: Esterase FrsA (414 aa).

The protein belongs to the FrsA family.

It catalyses the reaction a carboxylic ester + H2O = an alcohol + a carboxylate + H(+). Its function is as follows. Catalyzes the hydrolysis of esters. The protein is Esterase FrsA of Escherichia coli O6:K15:H31 (strain 536 / UPEC).